The primary structure comprises 543 residues: CTP synthase (543 aa).

The interval methionine 1 to leucine 267 is amidoligase domain. Position 15 (serine 15) interacts with CTP. Serine 15 contributes to the UTP binding site. ATP is bound by residues serine 16 to isoleucine 21 and aspartate 73. Mg(2+) contacts are provided by aspartate 73 and glutamate 141. Residues aspartate 148–glutamate 150, lysine 188–glutamine 193, and lysine 224 contribute to the CTP site. UTP contacts are provided by residues lysine 188–glutamine 193 and lysine 224. In terms of domain architecture, Glutamine amidotransferase type-1 spans lysine 292 to asparagine 543. Glycine 354 is a binding site for L-glutamine. Cysteine 381 serves as the catalytic Nucleophile; for glutamine hydrolysis. L-glutamine contacts are provided by residues leucine 382 to glutamine 385, glutamate 405, and arginine 473. Catalysis depends on residues histidine 516 and glutamate 518.

Belongs to the CTP synthase family. Homotetramer.

The enzyme catalyses UTP + L-glutamine + ATP + H2O = CTP + L-glutamate + ADP + phosphate + 2 H(+). It catalyses the reaction L-glutamine + H2O = L-glutamate + NH4(+). The catalysed reaction is UTP + NH4(+) + ATP = CTP + ADP + phosphate + 2 H(+). It participates in pyrimidine metabolism; CTP biosynthesis via de novo pathway; CTP from UDP: step 2/2. Its activity is regulated as follows. Allosterically activated by GTP, when glutamine is the substrate; GTP has no effect on the reaction when ammonia is the substrate. The allosteric effector GTP functions by stabilizing the protein conformation that binds the tetrahedral intermediate(s) formed during glutamine hydrolysis. Inhibited by the product CTP, via allosteric rather than competitive inhibition. In terms of biological role, catalyzes the ATP-dependent amination of UTP to CTP with either L-glutamine or ammonia as the source of nitrogen. Regulates intracellular CTP levels through interactions with the four ribonucleotide triphosphates. The polypeptide is CTP synthase (Campylobacter jejuni subsp. jejuni serotype O:23/36 (strain 81-176)).